The chain runs to 383 residues: Chitinase-3-like protein 1 (383 aa).

The first 21 residues, 1–21 (MGVKASQTGFVVLVLLQCCSA), serve as a signal peptide directing secretion. In terms of domain architecture, GH18 spans 22 to 383 (YKLVCYYTSW…NAIKDALAAT (362 aa)). A disulfide bond links Cys-26 and Cys-51. Asn-60 carries N-linked (GlcNAc...) asparagine glycosylation. Chitin-binding positions include 70–71 (EW), 97–100 (GGWN), Tyr-141, 204–207 (MTYD), and Arg-263. A disulfide bridge links Cys-300 with Cys-364. Residues 324-338 (QWVGYDDQESVKSKV) are important for AKT1 activation and IL8 production. A chitin-binding site is contributed by Trp-352.

Belongs to the glycosyl hydrolase 18 family. As to quaternary structure, monomer. In terms of processing, glycosylated. Present in activated macrophages, articular chondrocytes, synovial cells as well as in liver. Very low or undetectable expression in non-inflammatory colon. Undetectable in muscle tissues, lung, pancreas, mononuclear cells, or fibroblasts.

The protein resides in the secreted. It is found in the extracellular space. It localises to the cytoplasm. The protein localises to the perinuclear region. Its subcellular location is the endoplasmic reticulum. Functionally, carbohydrate-binding lectin with a preference for chitin. Has no chitinase activity. May play a role in tissue remodeling and in the capacity of cells to respond to and cope with changes in their environment. Plays a role in T-helper cell type 2 (Th2) inflammatory response and IL-13-induced inflammation, regulating allergen sensitization, inflammatory cell apoptosis, dendritic cell accumulation and M2 macrophage differentiation. Facilitates invasion of pathogenic enteric bacteria into colonic mucosa and lymphoid organs. Mediates activation of AKT1 signaling pathway and subsequent IL8 production in colonic epithelial cells. Regulates antibacterial responses in lung by contributing to macrophage bacterial killing, controlling bacterial dissemination and augmenting host tolerance. Also regulates hyperoxia-induced injury, inflammation and epithelial apoptosis in lung. In Homo sapiens (Human), this protein is Chitinase-3-like protein 1 (CHI3L1).